A 229-amino-acid chain; its full sequence is Orotidine 5'-phosphate decarboxylase (229 aa).

Substrate contacts are provided by residues D11, K33, 60 to 69 (DLKFHDIPNT), T119, R180, Q189, G209, and R210. The Proton donor role is filled by K62.

The protein belongs to the OMP decarboxylase family. Type 1 subfamily. In terms of assembly, homodimer.

It catalyses the reaction orotidine 5'-phosphate + H(+) = UMP + CO2. Its pathway is pyrimidine metabolism; UMP biosynthesis via de novo pathway; UMP from orotate: step 2/2. Catalyzes the decarboxylation of orotidine 5'-monophosphate (OMP) to uridine 5'-monophosphate (UMP). The polypeptide is Orotidine 5'-phosphate decarboxylase (Dichelobacter nodosus (strain VCS1703A)).